The following is a 580-amino-acid chain: N(6)-adenosine-methyltransferase catalytic subunit METTL3 (580 aa).

Residues 1 to 70 (MSDTWSSIQA…PKPSTASAVP (70 aa)) are disordered. At S2 the chain carries N-acetylserine; alternate. S2 carries the phosphoserine; alternate modification. Residues 28–37 (QDSGHLDLRN) are compositionally biased toward basic and acidic residues. S43, S48, and S50 each carry phosphoserine. Glycyl lysine isopeptide (Lys-Gly) (interchain with G-Cter in SUMO1) cross-links involve residues K177, K211, K212, and K215. Residues 198-219 (LNSSASEPAKEPAKKSRKHAAS) are disordered. The short motif at 210–215 (AKKSRK) is the Nuclear localization signal element. Phosphoserine occurs at positions 219 and 243. Residue T348 is modified to Phosphothreonine. S350 carries the post-translational modification Phosphoserine. S-adenosyl-L-methionine-binding positions include 377 to 378 (DI) and D395. The interval 396-410 (PPWDIHMELPYGTLT) is gate loop 1. 2 interaction with METTL14 regions span residues 450–454 (ERVDE) and 464–480 (QRII…NHGK). Residues 462-479 (QLQRIIRTGRTGHWLNHG) are interphase loop. Residues 465–478 (RIIRTGRTGHWLNH) form a positively charged region required for RNA-binding region. Positions 507 to 515 (VRSTSHKPD) are gate loop 2. S-adenosyl-L-methionine contacts are provided by residues K513, 536-539 (RPHN), and 549-550 (NQ).

This sequence belongs to the MT-A70-like family. Heterodimer; heterodimerizes with METTL14 to form an antiparallel heterodimer that constitutes an active methyltransferase. Component of the WMM complex, a N6-methyltransferase complex composed of a catalytic subcomplex, named MAC, and of an associated subcomplex, named MACOM. The MAC subcomplex is composed of METTL3 and METTL14. The MACOM subcomplex is composed of WTAP, ZC3H13, CBLL1/HAKAI, VIRMA, and, in some cases of RBM15 (RBM15 or RBM15B). Interacts with NCBP1/CBP80. Interacts with EIF4E. Interacts with EIF3B. Sumoylation inhibits the N6-adenosine-methyltransferase activity. Sumoylation does not affect subcellular location or interaction with METTL14. Desumoylated by SENP1. Widely expressed at low level. Expressed in spleen, thymus, prostate, testis, ovary, small intestine, colon and peripheral blood leukocytes.

It is found in the nucleus. The protein resides in the nucleus speckle. It localises to the cytoplasm. It catalyses the reaction an adenosine in mRNA + S-adenosyl-L-methionine = an N(6)-methyladenosine in mRNA + S-adenosyl-L-homocysteine + H(+). Its activity is regulated as follows. Methyltransferase activity is regulated by miRNAs via a sequence pairing mechanism. Methyltransferase activity is inhibited by sumoylation. In terms of biological role, the METTL3-METTL14 heterodimer forms a N6-methyltransferase complex that methylates adenosine residues at the N(6) position of some RNAs and regulates various processes such as the circadian clock, differentiation of embryonic and hematopoietic stem cells, cortical neurogenesis, response to DNA damage, differentiation of T-cells and primary miRNA processing. In the heterodimer formed with METTL14, METTL3 constitutes the catalytic core. N6-methyladenosine (m6A), which takes place at the 5'-[AG]GAC-3' consensus sites of some mRNAs, plays a role in mRNA stability, processing, translation efficiency and editing. M6A acts as a key regulator of mRNA stability: methylation is completed upon the release of mRNA into the nucleoplasm and promotes mRNA destabilization and degradation. In embryonic stem cells (ESCs), m6A methylation of mRNAs encoding key naive pluripotency-promoting transcripts results in transcript destabilization, promoting differentiation of ESCs. M6A regulates the length of the circadian clock: acts as an early pace-setter in the circadian loop by putting mRNA production on a fast-track for facilitating nuclear processing, thereby providing an early point of control in setting the dynamics of the feedback loop. M6A also regulates circadian regulation of hepatic lipid metabolism. M6A regulates spermatogonial differentiation and meiosis and is essential for male fertility and spermatogenesis. Also required for oogenesis. Involved in the response to DNA damage: in response to ultraviolet irradiation, METTL3 rapidly catalyzes the formation of m6A on poly(A) transcripts at DNA damage sites, leading to the recruitment of POLK to DNA damage sites. M6A is also required for T-cell homeostasis and differentiation: m6A methylation of transcripts of SOCS family members (SOCS1, SOCS3 and CISH) in naive T-cells promotes mRNA destabilization and degradation, promoting T-cell differentiation. Inhibits the type I interferon response by mediating m6A methylation of IFNB. M6A also takes place in other RNA molecules, such as primary miRNA (pri-miRNAs). Mediates m6A methylation of Xist RNA, thereby participating in random X inactivation: m6A methylation of Xist leads to target YTHDC1 reader on Xist and promote transcription repression activity of Xist. M6A also regulates cortical neurogenesis: m6A methylation of transcripts related to transcription factors, neural stem cells, the cell cycle and neuronal differentiation during brain development promotes their destabilization and decay, promoting differentiation of radial glial cells. METTL3 mediates methylation of pri-miRNAs, marking them for recognition and processing by DGCR8. Acts as a positive regulator of mRNA translation independently of the methyltransferase activity: promotes translation by interacting with the translation initiation machinery in the cytoplasm. Its overexpression in a number of cancer cells suggests that it may participate in cancer cell proliferation by promoting mRNA translation. During human coronavirus SARS-CoV-2 infection, adds m6A modifications in SARS-CoV-2 RNA leading to decreased RIGI binding and subsequently dampening the sensing and activation of innate immune responses. The chain is N(6)-adenosine-methyltransferase catalytic subunit METTL3 from Homo sapiens (Human).